The primary structure comprises 147 residues: Large ribosomal subunit protein uL13 (147 aa).

The protein belongs to the universal ribosomal protein uL13 family. As to quaternary structure, part of the 50S ribosomal subunit.

In terms of biological role, this protein is one of the early assembly proteins of the 50S ribosomal subunit, although it is not seen to bind rRNA by itself. It is important during the early stages of 50S assembly. In Rhodococcus erythropolis (strain PR4 / NBRC 100887), this protein is Large ribosomal subunit protein uL13.